Consider the following 372-residue polypeptide: L-lysine 4-hydroxylase (372 aa).

Fe cation contacts are provided by His-176, Glu-178, and His-312.

Belongs to the clavaminate synthase family. Fe(2+) serves as cofactor.

The catalysed reaction is L-lysine + 2-oxoglutarate + O2 = (4R)-4-hydroxy-L-lysine + succinate + CO2. Alpha-ketoglutarate-dependent dioxygenase that in vitro catalyzes the regio- and stereoselective hydroxylation of L-lysine, leading to (4R)-4-hydroxy-L-lysine. In Flavobacterium sp. (strain CF136), this protein is L-lysine 4-hydroxylase.